The chain runs to 342 residues: Glutamyl endopeptidase (342 aa).

The first 29 residues, 1–29 (MKGKFLKVSSLFVATLTTATLVSSPAANA), serve as a signal peptide directing secretion. Residues 30–68 (LSSKAMDNHPQQTQSSKQQTPKIKKGGNLKPLEQREHAN) constitute a propeptide that is removed on maturation. The interval 33-63 (KAMDNHPQQTQSSKQQTPKIKKGGNLKPLEQ) is disordered. The segment covering 39–50 (PQQTQSSKQQTP) has biased composition (low complexity). Catalysis depends on charge relay system residues His119, Asp161, and Ser237. The tract at residues 283-342 (FANDDQPNNPDNPDNPNNPDNPNNPDNPNNPDEPNNPDNPNNPDNPDNGDNNNSDNPDAA) is disordered. The segment covering 286–342 (DDQPNNPDNPDNPNNPDNPNNPDNPNNPDEPNNPDNPNNPDNPDNGDNNNSDNPDAA) has biased composition (low complexity). Tandem repeats lie at residues 289–291 (PNN), 292–294 (PDN), 295–297 (PDN), 298–300 (PNN), 301–303 (PDN), 304–306 (PNN), 307–309 (PDN), 310–312 (PNN), 316–318 (PNN), 319–321 (PDN), 322–324 (PNN), 325–327 (PDN), and 328–330 (PDN). The interval 289–330 (PNNPDNPDNPNNPDNPNNPDNPNNPDEPNNPDNPNNPDNPDN) is 13 X 3 AA repeats of P-[DN]-N.

The protein belongs to the peptidase S1B family. Post-translationally, proteolytically cleaved by aureolysin (aur). This cleavage leads to the activation of SspA.

It is found in the secreted. It catalyses the reaction Preferential cleavage: Glu-|-Xaa, Asp-|-Xaa.. In terms of biological role, preferentially cleaves peptide bonds on the carboxyl-terminal side of aspartate and glutamate. Along with other extracellular proteases it is involved in colonization and infection of human tissues. Required for proteolytic maturation of thiol protease SspB and inactivation of SspC, an inhibitor of SspB. It is the most important protease for degradation of fibronectin-binding protein (FnBP) and surface protein A, which are involved in adherence to host cells. May also protect bacteria against host defense mechanism by cleaving the immunoglobulin classes IgG, IgA and IgM. May be involved in the stability of secreted lipases. This Staphylococcus aureus (strain Mu50 / ATCC 700699) protein is Glutamyl endopeptidase (sspA).